Here is a 446-residue protein sequence, read N- to C-terminus: Phosphoglucosamine mutase (446 aa).

Ser100 functions as the Phosphoserine intermediate in the catalytic mechanism. Mg(2+)-binding residues include Ser100, Asp241, Asp243, and Asp245. Ser100 is subject to Phosphoserine.

This sequence belongs to the phosphohexose mutase family. Mg(2+) serves as cofactor. In terms of processing, activated by phosphorylation.

The catalysed reaction is alpha-D-glucosamine 1-phosphate = D-glucosamine 6-phosphate. Catalyzes the conversion of glucosamine-6-phosphate to glucosamine-1-phosphate. In Methylorubrum populi (strain ATCC BAA-705 / NCIMB 13946 / BJ001) (Methylobacterium populi), this protein is Phosphoglucosamine mutase.